The primary structure comprises 146 residues: MORN repeat-containing protein 4 (146 aa).

MORN repeat units follow at residues 16–38, 39–61, 62–84, and 85–107; these read YRGE…DGGT, YLGH…DGSR, YEGE…DNMT, and FEGE…DGSH.

Interacts with MYO3A. In terms of tissue distribution, retina.

The protein localises to the cytoplasm. Its subcellular location is the cell projection. It localises to the filopodium tip. The protein resides in the stereocilium. Functionally, plays a role in promoting axonal degeneration following neuronal injury by toxic insult or trauma. The protein is MORN repeat-containing protein 4 (MORN4) of Bos taurus (Bovine).